We begin with the raw amino-acid sequence, 319 residues long: Acetyl esterase (319 aa).

The Involved in the stabilization of the negatively charged intermediate by the formation of the oxyanion hole motif lies at 91 to 93 (HGG). Catalysis depends on residues S165, D262, and H292.

The protein belongs to the 'GDXG' lipolytic enzyme family. Homodimer. Interacts with MalT and MelA.

It localises to the cytoplasm. In terms of biological role, displays esterase activity towards short chain fatty esters (acyl chain length of up to 8 carbons). Able to hydrolyze triacetylglycerol (triacetin) and tributyrylglycerol (tributyrin), but not trioleylglycerol (triolein) or cholesterol oleate. Negatively regulates MalT activity by antagonizing maltotriose binding. Inhibits MelA galactosidase activity. The chain is Acetyl esterase from Escherichia coli (strain 55989 / EAEC).